Consider the following 96-residue polypeptide: UPF0235 protein YPK_0828 (96 aa).

It belongs to the UPF0235 family.

The polypeptide is UPF0235 protein YPK_0828 (Yersinia pseudotuberculosis serotype O:3 (strain YPIII)).